The following is a 126-amino-acid chain: Calcitonin receptor-stimulating peptide 1 (126 aa).

An N-terminal signal peptide occupies residues 1–25 (MGFWKFPPFLVLSILVLYQAGMFHT). The propeptide occupies 26 to 78 (APMRSAFGSPFDPATLSEEESRLLLAAMVNDYEQMKAREMQKQRAQGSGISVQ). Cysteines 82 and 87 form a disulfide. Glycine 118 bears the Glycine amide mark. Positions 123 to 126 (NFWI) are excised as a propeptide.

Mainly expressed in the thyroid gland and CNS. Found in the nerve cells of cerebrum, hippocampus, hypothalamus, pons/midbrain and thalamus.

It localises to the secreted. Stimulates cAMP production in porcine kidney cell line LLC-PK1 via the calcitonin receptor (CT) but not via the CT-like (CL) receptor. The protein is Calcitonin receptor-stimulating peptide 1 (CRSP1) of Sus scrofa (Pig).